A 276-amino-acid polypeptide reads, in one-letter code: ATP synthase subunit a (276 aa).

Transmembrane regions (helical) follow at residues 49–69 (KPML…FAAA), 109–129 (YLFT…IPFI), 137–157 (SGMV…AGIS), 173–193 (GIRG…NILV), 203–223 (FANM…GEYI), 232–252 (APVG…EMLI), and 253–273 (QFLQ…GAVA).

It belongs to the ATPase A chain family. F-type ATPases have 2 components, CF(1) - the catalytic core - and CF(0) - the membrane proton channel. CF(1) has five subunits: alpha(3), beta(3), gamma(1), delta(1), epsilon(1). CF(0) has three main subunits: a(1), b(2) and c(9-12). The alpha and beta chains form an alternating ring which encloses part of the gamma chain. CF(1) is attached to CF(0) by a central stalk formed by the gamma and epsilon chains, while a peripheral stalk is formed by the delta and b chains.

The protein localises to the cell membrane. Key component of the proton channel; it plays a direct role in the translocation of protons across the membrane. This chain is ATP synthase subunit a, found in Nocardioides sp. (strain ATCC BAA-499 / JS614).